A 210-amino-acid polypeptide reads, in one-letter code: Uracil phosphoribosyltransferase (210 aa).

5-phospho-alpha-D-ribose 1-diphosphate-binding positions include R80, R105, and 132–140 (DPMLATGGS). Uracil-binding positions include I195 and 200–202 (GDA). D201 is a 5-phospho-alpha-D-ribose 1-diphosphate binding site.

Belongs to the UPRTase family. Mg(2+) serves as cofactor.

The catalysed reaction is UMP + diphosphate = 5-phospho-alpha-D-ribose 1-diphosphate + uracil. Its pathway is pyrimidine metabolism; UMP biosynthesis via salvage pathway; UMP from uracil: step 1/1. Its activity is regulated as follows. Allosterically activated by GTP. Catalyzes the conversion of uracil and 5-phospho-alpha-D-ribose 1-diphosphate (PRPP) to UMP and diphosphate. The polypeptide is Uracil phosphoribosyltransferase (Thermoanaerobacter pseudethanolicus (strain ATCC 33223 / 39E) (Clostridium thermohydrosulfuricum)).